We begin with the raw amino-acid sequence, 273 residues long: Putative phosphoenolpyruvate synthase regulatory protein (273 aa).

Gly154–Thr161 is a binding site for ADP.

This sequence belongs to the pyruvate, phosphate/water dikinase regulatory protein family. PSRP subfamily.

It catalyses the reaction [pyruvate, water dikinase] + ADP = [pyruvate, water dikinase]-phosphate + AMP + H(+). It carries out the reaction [pyruvate, water dikinase]-phosphate + phosphate + H(+) = [pyruvate, water dikinase] + diphosphate. Functionally, bifunctional serine/threonine kinase and phosphorylase involved in the regulation of the phosphoenolpyruvate synthase (PEPS) by catalyzing its phosphorylation/dephosphorylation. This is Putative phosphoenolpyruvate synthase regulatory protein from Halorhodospira halophila (strain DSM 244 / SL1) (Ectothiorhodospira halophila (strain DSM 244 / SL1)).